Here is a 280-residue protein sequence, read N- to C-terminus: Protein scylla (280 aa).

Residues 39–96 (LMSKKAKTTTGGSSNGSNATATSTTTSTSSSIKHKQPAGSSNNNVGQSQSKKTKPSGS) form a disordered region. Composition is skewed to low complexity over residues 46 to 69 (TTTGGSSNGSNATATSTTTSTSSS) and 77 to 96 (GSSNNNVGQSQSKKTKPSGS).

Belongs to the DDIT4 family.

It is found in the cytoplasm. Inhibits cell growth by regulating the Tor pathway upstream of the Tsc1-Tsc2 complex and downstream of Akt1. Acts as a cell death activator during head development. The protein is Protein scylla (scyl) of Drosophila melanogaster (Fruit fly).